The following is a 316-amino-acid chain: Ribosomal RNA small subunit methyltransferase H (316 aa).

Residues 35–37 (SGH), Asp-55, Phe-84, Asp-105, and Gln-112 contribute to the S-adenosyl-L-methionine site.

The protein belongs to the methyltransferase superfamily. RsmH family.

It is found in the cytoplasm. The catalysed reaction is cytidine(1402) in 16S rRNA + S-adenosyl-L-methionine = N(4)-methylcytidine(1402) in 16S rRNA + S-adenosyl-L-homocysteine + H(+). Its function is as follows. Specifically methylates the N4 position of cytidine in position 1402 (C1402) of 16S rRNA. The protein is Ribosomal RNA small subunit methyltransferase H of Streptococcus equi subsp. zooepidemicus (strain H70).